A 117-amino-acid polypeptide reads, in one-letter code: uncharacterized protein (117 aa).

Belongs to the mimivirus R69 family.

This is an uncharacterized protein from Acanthamoeba polyphaga mimivirus (APMV).